The primary structure comprises 423 residues: 5-hydroxytryptamine receptor 1A-alpha (423 aa).

Residues Met1–Ile47 are Extracellular-facing. Residues Asn9, Asn12, and Asn30 are each glycosylated (N-linked (GlcNAc...) asparagine). A helical transmembrane segment spans residues Thr48–Ala68. Residues Ala69 to Tyr82 are Cytoplasmic-facing. The chain crosses the membrane as a helical span at residues Leu83–Val107. At Leu108 to Asp116 the chain is on the extracellular side. Residues Ile117 to Leu141 form a helical membrane-spanning segment. Cys118 and Cys196 are oxidised to a cystine. Serotonin contacts are provided by Asp125 and Cys129. The short motif at Asp142 to Tyr144 is the DRY motif; important for ligand-induced conformation changes element. The Cytoplasmic segment spans residues Asp142–Arg161. Residues Ala162 to Gly183 form a helical membrane-spanning segment. Over Trp184–Pro202 the chain is Extracellular. A helical transmembrane segment spans residues Gly203 to Gly225. The Cytoplasmic segment spans residues Arg226–Thr347. Residues Leu311–Thr332 are disordered. Over residues Thr316–Thr329 the composition is skewed to polar residues. 4 residues coordinate 1D-myo-inositol 4-phosphate: Ser320, Lys346, Thr347, and Gly353. Residues Leu348–Phe371 form a helical membrane-spanning segment. Residues Cys372 to Pro379 lie on the Extracellular side of the membrane. Residues Glu380–Phe404 form a helical membrane-spanning segment. An NPxxY motif; important for ligand-induced conformation changes and signaling motif is present at residues Asn397–Tyr401. 3 residues coordinate 1D-myo-inositol 4-phosphate: Phe404, Asn405, and Lys406. At Asn405–His423 the chain is on the cytoplasmic side.

It belongs to the G-protein coupled receptor 1 family. 5-hydroxytryptamine receptor subfamily.

It is found in the cell membrane. Its activity is regulated as follows. G-protein coupled receptor activity is regulated by lipids: phosphatidylinositol 4-phosphate increases HTR1A-mediated activity. In terms of biological role, G-protein coupled receptor for 5-hydroxytryptamine (serotonin). Also functions as a receptor for various drugs and psychoactive substances. Ligand binding causes a conformation change that triggers signaling via guanine nucleotide-binding proteins (G proteins) and modulates the activity of downstream effectors, such as adenylate cyclase. HTR1A is coupled to G(i)/G(o) G alpha proteins and mediates inhibitory neurotransmission: signaling inhibits adenylate cyclase activity and activates a phosphatidylinositol-calcium second messenger system that regulates the release of Ca(2+) ions from intracellular stores. Beta-arrestin family members regulate signaling by mediating both receptor desensitization and resensitization processes. This is 5-hydroxytryptamine receptor 1A-alpha (htr1aa) from Takifugu rubripes (Japanese pufferfish).